Reading from the N-terminus, the 114-residue chain is Probable non-functional T cell receptor beta variable 5-7 (114 aa).

An N-terminal signal peptide occupies residues 1-21 (MGPGLLCWVLLCPLGEGPVDA). The region spanning 22–114 (GVTQSPTHLI…SALYLCASSL (93 aa)) is the Ig-like domain. Cysteines 42 and 110 form a disulfide. N-linked (GlcNAc...) asparagine glycosylation occurs at N90.

Alpha-beta TR is a heterodimer composed of an alpha and beta chain; disulfide-linked. The alpha-beta TR is associated with the transmembrane signaling CD3 coreceptor proteins to form the TR-CD3 (TcR or TCR). The assembly of alpha-beta TR heterodimers with CD3 occurs in the endoplasmic reticulum where a single alpha-beta TR heterodimer associates with one CD3D-CD3E heterodimer, one CD3G-CD3E heterodimer and one CD247 homodimer forming a stable octameric structure. CD3D-CD3E and CD3G-CD3E heterodimers preferentially associate with TR alpha and TR beta chains, respectively. The association of the CD247 homodimer is the last step of TcR assembly in the endoplasmic reticulum and is required for transport to the cell surface.

The protein resides in the cell membrane. In terms of biological role, probable non-functional open reading frame (ORF) of V region of the variable domain of T cell receptor (TR) beta chain. Non-functional ORF generally cannot participate in the synthesis of a productive T cell receptor (TR) chain due to altered V-(D)-J or switch recombination and/or splicing site (at mRNA level) and/or conserved amino acid change (protein level). Alpha-beta T cell receptors are antigen specific receptors which are essential to the immune response and are present on the cell surface of T lymphocytes. Recognize peptide-major histocompatibility (MH) (pMH) complexes that are displayed by antigen presenting cells (APC), a prerequisite for efficient T cell adaptive immunity against pathogens. Binding of alpha-beta TR to pMH complex initiates TR-CD3 clustering on the cell surface and intracellular activation of LCK that phosphorylates the ITAM motifs of CD3G, CD3D, CD3E and CD247 enabling the recruitment of ZAP70. In turn ZAP70 phosphorylates LAT, which recruits numerous signaling molecules to form the LAT signalosome. The LAT signalosome propagates signal branching to three major signaling pathways, the calcium, the mitogen-activated protein kinase (MAPK) kinase and the nuclear factor NF-kappa-B (NF-kB) pathways, leading to the mobilization of transcription factors that are critical for gene expression and essential for T cell growth and differentiation. The T cell repertoire is generated in the thymus, by V-(D)-J rearrangement. This repertoire is then shaped by intrathymic selection events to generate a peripheral T cell pool of self-MH restricted, non-autoaggressive T cells. Post-thymic interaction of alpha-beta TR with the pMH complexes shapes TR structural and functional avidity. In Homo sapiens (Human), this protein is Probable non-functional T cell receptor beta variable 5-7.